The following is a 418-amino-acid chain: Light-independent protochlorophyllide reductase subunit N (418 aa).

[4Fe-4S] cluster-binding residues include cysteine 17, cysteine 42, and cysteine 103.

It belongs to the BchN/ChlN family. As to quaternary structure, protochlorophyllide reductase is composed of three subunits; ChlL, ChlN and ChlB. Forms a heterotetramer of two ChlB and two ChlN subunits. It depends on [4Fe-4S] cluster as a cofactor.

The catalysed reaction is chlorophyllide a + oxidized 2[4Fe-4S]-[ferredoxin] + 2 ADP + 2 phosphate = protochlorophyllide a + reduced 2[4Fe-4S]-[ferredoxin] + 2 ATP + 2 H2O. Its pathway is porphyrin-containing compound metabolism; chlorophyll biosynthesis (light-independent). In terms of biological role, component of the dark-operative protochlorophyllide reductase (DPOR) that uses Mg-ATP and reduced ferredoxin to reduce ring D of protochlorophyllide (Pchlide) to form chlorophyllide a (Chlide). This reaction is light-independent. The NB-protein (ChlN-ChlB) is the catalytic component of the complex. The polypeptide is Light-independent protochlorophyllide reductase subunit N (Prochlorococcus marinus subsp. pastoris (strain CCMP1986 / NIES-2087 / MED4)).